A 186-amino-acid chain; its full sequence is MRVILIVPIGYIPEWLIKDVAEFVDSYYSRRGVSVKAGDSLSESLFLSAYHPFRRQFLGGAFLPTLSEIGRRAGALATVGITKVDLYEKGMNFVFGVASEKLRSAVVSIHRLRPEFYGRPSNDELLIERTVKEVMHELGHVFGLSHCPNVRCVMHFSNSVDDTDIKLPYYCPNCERKLLRNLEVVL.

H136 provides a ligand contact to Zn(2+). The active-site Proton acceptor is the E137. Zn(2+) is bound by residues H140, H146, C147, C152, C171, and C174.

This sequence belongs to the peptidase M54 family. In terms of assembly, monomer. It depends on Zn(2+) as a cofactor.

In terms of biological role, probable zinc metalloprotease whose natural substrate is unknown. The chain is Archaemetzincin from Thermococcus kodakarensis (strain ATCC BAA-918 / JCM 12380 / KOD1) (Pyrococcus kodakaraensis (strain KOD1)).